The primary structure comprises 949 residues: Glycine dehydrogenase (decarboxylating) (949 aa).

Residue Lys702 is modified to N6-(pyridoxal phosphate)lysine.

The protein belongs to the GcvP family. The glycine cleavage system is composed of four proteins: P, T, L and H. Pyridoxal 5'-phosphate serves as cofactor.

It catalyses the reaction N(6)-[(R)-lipoyl]-L-lysyl-[glycine-cleavage complex H protein] + glycine + H(+) = N(6)-[(R)-S(8)-aminomethyldihydrolipoyl]-L-lysyl-[glycine-cleavage complex H protein] + CO2. The glycine cleavage system catalyzes the degradation of glycine. The P protein binds the alpha-amino group of glycine through its pyridoxal phosphate cofactor; CO(2) is released and the remaining methylamine moiety is then transferred to the lipoamide cofactor of the H protein. This Rhodococcoides fascians (Rhodococcus fascians) protein is Glycine dehydrogenase (decarboxylating).